Here is a 97-residue protein sequence, read N- to C-terminus: Signal recognition particle 19 kDa protein (97 aa).

Belongs to the SRP19 family. In terms of assembly, part of the signal recognition particle protein translocation system, which is composed of SRP and FtsY. Archaeal SRP consists of a 7S RNA molecule of 300 nucleotides and two protein subunits: SRP54 and SRP19.

The protein resides in the cytoplasm. Its function is as follows. Involved in targeting and insertion of nascent membrane proteins into the cytoplasmic membrane. Binds directly to 7S RNA and mediates binding of the 54 kDa subunit of the SRP. The sequence is that of Signal recognition particle 19 kDa protein from Pyrobaculum calidifontis (strain DSM 21063 / JCM 11548 / VA1).